The primary structure comprises 487 residues: Diacylglycerol kinase 4 (487 aa).

One can recognise a DAGKc domain in the interval 86 to 242; sequence TPEVPLMVFV…LDSWNILITM (157 aa).

It belongs to the eukaryotic diacylglycerol kinase family. Monomer. Highly expressed in pollen grains. Expressed in roots, hypocotyls, leaf vasculature, developing anthers and stigmas, and receptacles of siliques.

The protein resides in the endoplasmic reticulum. The protein localises to the cytoplasm. It is found in the cytosol. The catalysed reaction is a 1,2-diacyl-sn-glycerol + ATP = a 1,2-diacyl-sn-glycero-3-phosphate + ADP + H(+). Phosphorylates the second messenger diacylglycerol (DAG) to generate phosphatidic acid (PA), another important signaling molecule. PA is required for plant development and responses to abiotic stress and pathogen attack. May be involved in the accumulation of PA during cold stress. Involved in the regulation of PA and phosphatidylcholine biosynthesis in growing pollen tubes. Required for nitric oxide-dependent pollen tube growth and re-orientation responses. Functions together with DGK2 in male gametophyte development and biosynthesis of phosphatidylglycerol and phosphatidylinositol in the endoplasmic reticulum (ER). Involved in PA production for pollen grain growth, as well as leaf and root growth. Possesses guanylyl cyclase activity in vitro. The sequence is that of Diacylglycerol kinase 4 from Arabidopsis thaliana (Mouse-ear cress).